Reading from the N-terminus, the 274-residue chain is MAIVKCKPTSPGRRHVVKVVNPELHKGKPFAPLLEKNSKTGGRNNNGRITTRHIGGGHKQQYRLIDFKRNKDGIPAVVERLEYDPNRSANIALVLYKDGERRYILAAKGLKAGDQIQSGVDAAIKAGNTLPMRNIPVGSTVHNVEMKPGKGGQLARSAGAYVQIVARDGAYVTLRLRSGEMRKIPADCRATLGEVGNAEHMLRVLGKAGAARWRGVRPTVRGTAMNPVDHPHGGGEGRNFGKHPVTPWGVQTKGKKTRSNKRTDKFIVRRRSKK.

Disordered regions lie at residues lysine 28–isoleucine 54 and arginine 221–lysine 274. Polar residues predominate over residues lysine 39–isoleucine 49.

Belongs to the universal ribosomal protein uL2 family. Part of the 50S ribosomal subunit. Forms a bridge to the 30S subunit in the 70S ribosome.

Its function is as follows. One of the primary rRNA binding proteins. Required for association of the 30S and 50S subunits to form the 70S ribosome, for tRNA binding and peptide bond formation. It has been suggested to have peptidyltransferase activity; this is somewhat controversial. Makes several contacts with the 16S rRNA in the 70S ribosome. In Edwardsiella ictaluri (strain 93-146), this protein is Large ribosomal subunit protein uL2.